Here is a 314-residue protein sequence, read N- to C-terminus: Malate dehydrogenase (314 aa).

Residues 11 to 16 and Asp-35 contribute to the NAD(+) site; that span reads GSGNIG. Positions 84 and 90 each coordinate substrate. NAD(+) contacts are provided by residues Asn-97 and 120–122; that span reads ITN. Substrate-binding residues include Asn-122 and Arg-153. His-177 (proton acceptor) is an active-site residue.

This sequence belongs to the LDH/MDH superfamily. MDH type 3 family.

The catalysed reaction is (S)-malate + NAD(+) = oxaloacetate + NADH + H(+). In terms of biological role, catalyzes the reversible oxidation of malate to oxaloacetate. This is Malate dehydrogenase from Rickettsia bellii (strain RML369-C).